A 215-amino-acid chain; its full sequence is MLDMKRNRERMVKQQLETRGITDPAVLAAMRSVPRHLFVQEALRAQAYEDHPLPIGYGQTISQPFIVALMSQIIEPQPGLRVLEIGTGSGYQAAVLAEMGLDVYTVERIRELHAAARDLLRTLKYRKVRLKLDDGTLGWPEAAPYDRILVTAGGPEVPLPLIEQLADPGIMVIPVGASKRMQELVVVRKQGGRVVRESKGGVAFVDLVGTHGWRG.

Ser-62 is an active-site residue.

It belongs to the methyltransferase superfamily. L-isoaspartyl/D-aspartyl protein methyltransferase family.

It localises to the cytoplasm. It catalyses the reaction [protein]-L-isoaspartate + S-adenosyl-L-methionine = [protein]-L-isoaspartate alpha-methyl ester + S-adenosyl-L-homocysteine. Catalyzes the methyl esterification of L-isoaspartyl residues in peptides and proteins that result from spontaneous decomposition of normal L-aspartyl and L-asparaginyl residues. It plays a role in the repair and/or degradation of damaged proteins. The chain is Protein-L-isoaspartate O-methyltransferase from Nitratidesulfovibrio vulgaris (strain DSM 19637 / Miyazaki F) (Desulfovibrio vulgaris).